Reading from the N-terminus, the 101-residue chain is Small ribosomal subunit protein uS14 (101 aa).

This sequence belongs to the universal ribosomal protein uS14 family. In terms of assembly, part of the 30S ribosomal subunit. Contacts proteins S3 and S10.

Its function is as follows. Binds 16S rRNA, required for the assembly of 30S particles and may also be responsible for determining the conformation of the 16S rRNA at the A site. In Buchnera aphidicola subsp. Baizongia pistaciae (strain Bp), this protein is Small ribosomal subunit protein uS14.